Reading from the N-terminus, the 238-residue chain is Ribosomal RNA large subunit methyltransferase E (238 aa).

Positions 85, 87, 113, 129, and 153 each coordinate S-adenosyl-L-methionine. The active-site Proton acceptor is the lysine 193.

The protein belongs to the class I-like SAM-binding methyltransferase superfamily. RNA methyltransferase RlmE family.

It is found in the cytoplasm. The enzyme catalyses uridine(2552) in 23S rRNA + S-adenosyl-L-methionine = 2'-O-methyluridine(2552) in 23S rRNA + S-adenosyl-L-homocysteine + H(+). In terms of biological role, specifically methylates the uridine in position 2552 of 23S rRNA at the 2'-O position of the ribose in the fully assembled 50S ribosomal subunit. The protein is Ribosomal RNA large subunit methyltransferase E of Ruegeria sp. (strain TM1040) (Silicibacter sp.).